Reading from the N-terminus, the 618-residue chain is UvrABC system protein C (618 aa).

The 79-residue stretch at 20–98 (TAPGVYRMYA…IKSLSPRYNV (79 aa)) folds into the GIY-YIG domain. The region spanning 207–242 (DQLGEEIMHSMQQASEALEFERAARLRDLLSSLRSM) is the UVR domain.

Belongs to the UvrC family. In terms of assembly, interacts with UvrB in an incision complex.

The protein resides in the cytoplasm. The UvrABC repair system catalyzes the recognition and processing of DNA lesions. UvrC both incises the 5' and 3' sides of the lesion. The N-terminal half is responsible for the 3' incision and the C-terminal half is responsible for the 5' incision. The polypeptide is UvrABC system protein C (Xanthomonas campestris pv. campestris (strain 8004)).